The following is a 445-amino-acid chain: Rab GDP dissociation inhibitor beta (445 aa).

M1 carries the post-translational modification N-acetylmethionine. K57 is modified (N6-succinyllysine). K112 carries the post-translational modification N6-acetyllysine. Phosphoserine is present on S130. K269 is subject to N6-acetyllysine. S382 is modified (phosphoserine).

Belongs to the Rab GDI family. In terms of assembly, interacts with RHOH. Interacts with the GDP-bound inactive forms of RAB3A, RAB3B, RAB3C, RAB5A, RAB5B, RAB5C, RAB8A, RAB8B, RAB10, RAB12, RAB35, and RAB43; binds RAB3D to a lesser extent. Interacts with DZIP1; this interaction negatively regulates the interaction of GDI2 with GDP-bound RAB8A.

The protein resides in the cytoplasm. The protein localises to the membrane. Its subcellular location is the golgi apparatus. It localises to the trans-Golgi network. Its function is as follows. GDP-dissociation inhibitor preventing the GDP to GTP exchange of most Rab proteins. By keeping these small GTPases in their inactive GDP-bound form regulates intracellular membrane trafficking. Negatively regulates protein transport to the cilium and ciliogenesis through the inhibition of RAB8A. The sequence is that of Rab GDP dissociation inhibitor beta (GDI2) from Canis lupus familiaris (Dog).